Here is a 357-residue protein sequence, read N- to C-terminus: DNA replication and repair protein RecF (357 aa).

30 to 37 contributes to the ATP binding site; the sequence is GANGSGKT.

It belongs to the RecF family.

The protein localises to the cytoplasm. Its function is as follows. The RecF protein is involved in DNA metabolism; it is required for DNA replication and normal SOS inducibility. RecF binds preferentially to single-stranded, linear DNA. It also seems to bind ATP. The sequence is that of DNA replication and repair protein RecF from Shigella flexneri serotype 5b (strain 8401).